Reading from the N-terminus, the 152-residue chain is Deoxyuridine 5'-triphosphate nucleotidohydrolase (152 aa).

Substrate-binding positions include 71–73 (RSG), asparagine 84, 88–90 (LID), and methionine 98.

This sequence belongs to the dUTPase family. Requires Mg(2+) as cofactor.

It catalyses the reaction dUTP + H2O = dUMP + diphosphate + H(+). The protein operates within pyrimidine metabolism; dUMP biosynthesis; dUMP from dCTP (dUTP route): step 2/2. In terms of biological role, this enzyme is involved in nucleotide metabolism: it produces dUMP, the immediate precursor of thymidine nucleotides and it decreases the intracellular concentration of dUTP so that uracil cannot be incorporated into DNA. The protein is Deoxyuridine 5'-triphosphate nucleotidohydrolase of Klebsiella pneumoniae subsp. pneumoniae (strain ATCC 700721 / MGH 78578).